We begin with the raw amino-acid sequence, 526 residues long: Arp2/3 complex-activating protein rickA (526 aa).

The segment at 305–356 is disordered; that stretch reads TTSSIAKPLENNVTPPPPLTKNNIPPPPPPPPLSKNNILPPPPPPMPTMAPA. Residues 318–352 are compositionally biased toward pro residues; sequence TPPPPLTKNNIPPPPPPPPLSKNNILPPPPPPMPT. WH2 domains are found at residues 383-400 and 410-427; these read DTSDLMREIAGPKNLRKV and SRDLLLQSIRGEHKLRKV. Disordered regions lie at residues 425 to 452 and 464 to 526; these read RKVEFDPNTGKPVAHSHSKPAQNVSKPN and MEMS…FVRS. The central and acidic domains stretch occupies residues 448–484; it reads VSKPNGVASILARRVAMEMSDSSSSSGSESDSGNWSD. Residues 464–480 show a composition bias toward low complexity; sequence MEMSDSSSSSGSESDSG. Polar residues-rich tracts occupy residues 481-491 and 506-526; these read NWSDASVNSNK and TTHAQKILSNRSSQKPSFVRS.

Homodimer.

The protein localises to the cell surface. Recruits and activates the Arp2/3 complex, which in turn leads to actin polymerization, promoting Rickettsia motility during infection. The polypeptide is Arp2/3 complex-activating protein rickA (rickA) (Rickettsia felis (strain ATCC VR-1525 / URRWXCal2) (Rickettsia azadi)).